Consider the following 419-residue polypeptide: Glutamyl-tRNA reductase (419 aa).

Substrate-binding positions include 49 to 52, Ser107, 112 to 114, and Gln118; these read TCNR and EPQ. Cys50 serves as the catalytic Nucleophile. 187–192 provides a ligand contact to NADP(+); the sequence is GAGETI.

Belongs to the glutamyl-tRNA reductase family. In terms of assembly, homodimer.

The catalysed reaction is (S)-4-amino-5-oxopentanoate + tRNA(Glu) + NADP(+) = L-glutamyl-tRNA(Glu) + NADPH + H(+). It functions in the pathway porphyrin-containing compound metabolism; protoporphyrin-IX biosynthesis; 5-aminolevulinate from L-glutamyl-tRNA(Glu): step 1/2. Functionally, catalyzes the NADPH-dependent reduction of glutamyl-tRNA(Glu) to glutamate 1-semialdehyde (GSA). The chain is Glutamyl-tRNA reductase from Psychromonas ingrahamii (strain DSM 17664 / CCUG 51855 / 37).